Here is a 456-residue protein sequence, read N- to C-terminus: Histidine--tRNA ligase (456 aa).

The protein belongs to the class-II aminoacyl-tRNA synthetase family. Homodimer.

Its subcellular location is the cytoplasm. It catalyses the reaction tRNA(His) + L-histidine + ATP = L-histidyl-tRNA(His) + AMP + diphosphate + H(+). This chain is Histidine--tRNA ligase, found in Borreliella afzelii (strain PKo) (Borrelia afzelii).